Here is a 659-residue protein sequence, read N- to C-terminus: Chaperone protein DnaK (659 aa).

Phosphothreonine; by autocatalysis is present on threonine 201. Residues arginine 571–arginine 592 show a composition bias toward basic and acidic residues. The tract at residues arginine 571 to aspartate 659 is disordered. Positions alanine 600 to glutamine 613 are enriched in low complexity.

This sequence belongs to the heat shock protein 70 family.

Its function is as follows. Acts as a chaperone. This Chlamydia abortus (strain DSM 27085 / S26/3) (Chlamydophila abortus) protein is Chaperone protein DnaK.